The following is a 694-amino-acid chain: Maintenance of telomere capping protein 4 (694 aa).

Over residues 1–12 the composition is skewed to basic and acidic residues; the sequence is MTHTNEHDHKAE. A disordered region spans residues 1–26; sequence MTHTNEHDHKAEQQQNGRGDTTTETV. Polar residues predominate over residues 13 to 26; the sequence is QQQNGRGDTTTETV. A Phosphoserine modification is found at S85. Residues 211-222 are compositionally biased toward low complexity; it reads YSPSNESSGSSS. Disordered stretches follow at residues 211-287, 325-437, and 465-511; these read YSPS…PEAQ, AKGS…TETY, and KTSN…PVGL. Positions 223-243 are enriched in basic residues; that stretch reads SRRHHGHHIHPRRHLQHHSRV. Residues 244–257 show a composition bias toward polar residues; the sequence is RTANSVHSNTQSLT. A Phosphothreonine modification is found at T263. Residues 276 to 287 show a composition bias toward polar residues; that stretch reads MITKIATTPEAQ. Residues 403–417 are compositionally biased toward low complexity; it reads SNGGTSRRSSNNGES. The span at 418–437 shows a compositional bias: polar residues; that stretch reads ISTNSSKSSMGITFGNTETY. Basic and acidic residues predominate over residues 471–485; sequence LRAEGEQALESDKEL. Phosphoserine occurs at positions 481 and 491. The residue at position 493 (Y493) is a Phosphotyrosine. Residues 655 to 675 form a helical membrane-spanning segment; it reads RLLEFGIVLVLWTIWFLFSVL.

The protein resides in the membrane. The protein localises to the cytoplasm. This is Maintenance of telomere capping protein 4 (MTC4) from Saccharomyces cerevisiae (strain ATCC 204508 / S288c) (Baker's yeast).